Consider the following 218-residue polypeptide: Large ribosomal subunit protein bL25 (218 aa).

Residues 178–218 (VTPPTVTEDPDATEEDNTTAESVEATGERNDDNLDRPGRVE) form a disordered region. A compositionally biased stretch (acidic residues) spans 185–195 (EDPDATEEDNT). Positions 203 to 218 (TGERNDDNLDRPGRVE) are enriched in basic and acidic residues.

This sequence belongs to the bacterial ribosomal protein bL25 family. CTC subfamily. In terms of assembly, part of the 50S ribosomal subunit; part of the 5S rRNA/L5/L18/L25 subcomplex. Contacts the 5S rRNA. Binds to the 5S rRNA independently of L5 and L18.

Functionally, this is one of the proteins that binds to the 5S RNA in the ribosome where it forms part of the central protuberance. The chain is Large ribosomal subunit protein bL25 from Shouchella clausii (strain KSM-K16) (Alkalihalobacillus clausii).